A 395-amino-acid polypeptide reads, in one-letter code: Phosphoglycerate kinase (395 aa).

Residues 21–23 (DLN), Arg-36, 59–62 (HLGR), Arg-113, and Arg-146 contribute to the substrate site. ATP contacts are provided by residues Lys-197, Glu-324, and 350 to 353 (GGDT).

Belongs to the phosphoglycerate kinase family. In terms of assembly, monomer.

It localises to the cytoplasm. The catalysed reaction is (2R)-3-phosphoglycerate + ATP = (2R)-3-phospho-glyceroyl phosphate + ADP. The protein operates within carbohydrate degradation; glycolysis; pyruvate from D-glyceraldehyde 3-phosphate: step 2/5. The chain is Phosphoglycerate kinase from Acinetobacter baumannii (strain AB307-0294).